Reading from the N-terminus, the 166-residue chain is Prorelaxin H2 (166 aa).

Positions 1-5 (SRAVA) are cleaved as a signal peptide. 3 cysteine pairs are disulfide-bonded: Cys-16/Cys-153, Cys-28/Cys-166, and Cys-152/Cys-157. The propeptide at 37–138 (SLSQEDAPQT…LKYLGLDTHS (102 aa)) is connecting peptide.

It belongs to the insulin family. Heterodimer of a B chain and an A chain linked by two disulfide bonds. Expressed in the corpus luteum of pregnancy and in the placenta.

The protein localises to the secreted. Functionally, relaxin is an ovarian hormone that acts with estrogen to produce dilatation of the birth canal in many mammals. May be involved in remodeling of connective tissues during pregnancy, promoting growth of pubic ligaments and ripening of the cervix. The chain is Prorelaxin H2 (RNL2) from Pan troglodytes (Chimpanzee).